The primary structure comprises 115 residues: Large ribosomal subunit protein bL20 (115 aa).

This sequence belongs to the bacterial ribosomal protein bL20 family.

Functionally, binds directly to 23S ribosomal RNA and is necessary for the in vitro assembly process of the 50S ribosomal subunit. It is not involved in the protein synthesizing functions of that subunit. This is Large ribosomal subunit protein bL20 from Prochlorococcus marinus (strain MIT 9313).